Here is a 922-residue protein sequence, read N- to C-terminus: Disintegrin and metalloproteinase domain-containing protein 10 homolog (922 aa).

The first 26 residues, 1–26 (MSSPIRNRLQLVVTLIFCLFFENVNG), serve as a signal peptide directing secretion. Positions 27–228 (LNNFIDNFET…YMTMGGRSKR (202 aa)) are excised as a propeptide. N-linked (GlcNAc...) asparagine glycosylation is found at N74, N185, and N346. Over 229 to 745 (ANTLRDHDGL…ETLTQWAQDN (517 aa)) the chain is Extracellular. Residues 242 to 480 (RTCSLYMQAD…CSVKNISAVL (239 aa)) form the Peptidase M12B domain. H426 is a binding site for Zn(2+). E427 is a catalytic residue. 2 residues coordinate Zn(2+): H430 and H436. C442 and C471 are joined by a disulfide. N475 carries an N-linked (GlcNAc...) asparagine glycan. Residues 511-615 (SAFCGNQIYE…QCPVSPPKHD (105 aa)) form the Disintegrin domain. 5 disulfides stabilise this stretch: C542/C577, C564/C572, C588/C607, C594/C626, and C619/C631. N-linked (GlcNAc...) asparagine glycosylation occurs at N632. 4 cysteine pairs are disulfide-bonded: C636–C659, C644–C665, C655–C707, and C700–C713. N-linked (GlcNAc...) asparagine glycosylation occurs at N677. The chain crosses the membrane as a helical span at residues 746–766 (WWVVGVGGLVFLVIMALFVKC). Over 767–922 (CAVHTPSTNP…SGNGGKKKGK (156 aa)) the chain is Cytoplasmic. Disordered regions lie at residues 797–837 (QHRQ…PSAP) and 864–922 (PGSS…KKGK). The span at 805–834 (AAGSVPPGPGAQPRSGAASAPSRTTPSARP) shows a compositional bias: low complexity.

May interact with tetraspanin tsp-12; the interaction promotes sup-17 cell membrane localization. Requires Zn(2+) as cofactor. Expressed in the germline.

The protein resides in the cell membrane. Its subcellular location is the basolateral cell membrane. It localises to the cytoplasmic vesicle membrane. It carries out the reaction Endopeptidase of broad specificity.. Metalloprotease. Acts together with protease adm-4 and in a cell autonomous manner to facilitate lin-12/Notch signaling during developmental cell fate decision, including anchor cell/ventral uterine precursor cell decision and vulva precursor cell specification. By modulating glp-1/Notch signaling, plays a role in germline development. Probably by modulating BMP-like Sma/Mab signaling via the shedding of unc-40 ectodomain, involved in the regulation of body size and mesoderm development. Probably by shedding ephrin efn-4, regulates axon guidance of SDQL neuron during development. The polypeptide is Disintegrin and metalloproteinase domain-containing protein 10 homolog (Caenorhabditis elegans).